The following is a 195-amino-acid chain: Imidazoleglycerol-phosphate dehydratase (195 aa).

The protein belongs to the imidazoleglycerol-phosphate dehydratase family.

It localises to the cytoplasm. The catalysed reaction is D-erythro-1-(imidazol-4-yl)glycerol 3-phosphate = 3-(imidazol-4-yl)-2-oxopropyl phosphate + H2O. It participates in amino-acid biosynthesis; L-histidine biosynthesis; L-histidine from 5-phospho-alpha-D-ribose 1-diphosphate: step 6/9. The chain is Imidazoleglycerol-phosphate dehydratase from Sphingopyxis alaskensis (strain DSM 13593 / LMG 18877 / RB2256) (Sphingomonas alaskensis).